A 187-amino-acid chain; its full sequence is UPF0301 protein ETA_28320 (187 aa).

The protein belongs to the UPF0301 (AlgH) family.

In Erwinia tasmaniensis (strain DSM 17950 / CFBP 7177 / CIP 109463 / NCPPB 4357 / Et1/99), this protein is UPF0301 protein ETA_28320.